A 484-amino-acid chain; its full sequence is Aspartyl/glutamyl-tRNA(Asn/Gln) amidotransferase subunit B (484 aa).

This sequence belongs to the GatB/GatE family. GatB subfamily. In terms of assembly, heterotrimer of A, B and C subunits.

It catalyses the reaction L-glutamyl-tRNA(Gln) + L-glutamine + ATP + H2O = L-glutaminyl-tRNA(Gln) + L-glutamate + ADP + phosphate + H(+). The catalysed reaction is L-aspartyl-tRNA(Asn) + L-glutamine + ATP + H2O = L-asparaginyl-tRNA(Asn) + L-glutamate + ADP + phosphate + 2 H(+). Allows the formation of correctly charged Asn-tRNA(Asn) or Gln-tRNA(Gln) through the transamidation of misacylated Asp-tRNA(Asn) or Glu-tRNA(Gln) in organisms which lack either or both of asparaginyl-tRNA or glutaminyl-tRNA synthetases. The reaction takes place in the presence of glutamine and ATP through an activated phospho-Asp-tRNA(Asn) or phospho-Glu-tRNA(Gln). The chain is Aspartyl/glutamyl-tRNA(Asn/Gln) amidotransferase subunit B from Anaeromyxobacter dehalogenans (strain 2CP-C).